A 1039-amino-acid polypeptide reads, in one-letter code: Beta-galactosidase (1039 aa).

2 residues coordinate substrate: Asn-103 and Asp-201. Asp-201 is a Na(+) binding site. Mg(2+)-binding residues include Glu-415, His-417, and Glu-460. Residues Glu-460 and 536-539 contribute to the substrate site; that span reads EYAH. Glu-460 serves as the catalytic Proton donor. Glu-536 (nucleophile) is an active-site residue. Asn-596 provides a ligand contact to Mg(2+). Phe-600 and Asn-603 together coordinate Na(+). Substrate contacts are provided by Asn-603 and Trp-1012.

Belongs to the glycosyl hydrolase 2 family. As to quaternary structure, homotetramer. Requires Mg(2+) as cofactor. Na(+) serves as cofactor.

The enzyme catalyses Hydrolysis of terminal non-reducing beta-D-galactose residues in beta-D-galactosides.. Its activity is regulated as follows. Inhibited by zinc, copper and nickel ions. Activated by 2-mercaptoethanol and inhibited by EDTA in vitro. The polypeptide is Beta-galactosidase (lacZ) (Pseudoalteromonas haloplanktis (Alteromonas haloplanktis)).